Consider the following 249-residue polypeptide: NADH-quinone oxidoreductase subunit C (249 aa).

This sequence belongs to the complex I 30 kDa subunit family. In terms of assembly, NDH-1 is composed of 14 different subunits. Subunits NuoB, C, D, E, F, and G constitute the peripheral sector of the complex.

The protein resides in the cell inner membrane. It catalyses the reaction a quinone + NADH + 5 H(+)(in) = a quinol + NAD(+) + 4 H(+)(out). Its function is as follows. NDH-1 shuttles electrons from NADH, via FMN and iron-sulfur (Fe-S) centers, to quinones in the respiratory chain. The immediate electron acceptor for the enzyme in this species is believed to be ubiquinone. Couples the redox reaction to proton translocation (for every two electrons transferred, four hydrogen ions are translocated across the cytoplasmic membrane), and thus conserves the redox energy in a proton gradient. The chain is NADH-quinone oxidoreductase subunit C from Stenotrophomonas maltophilia (strain R551-3).